A 366-amino-acid chain; its full sequence is Isopentenyl-diphosphate delta-isomerase (366 aa).

Substrate is bound at residue 6–7; sequence RK. FMN is bound by residues Thr-63, 64–66, Ser-94, and Asn-123; that span reads GMT. 94-96 is a substrate binding site; the sequence is SQR. A substrate-binding site is contributed by Gln-158. Glu-159 lines the Mg(2+) pocket. FMN is bound by residues Lys-191, Ser-216, Thr-221, 273–275, and 294–295; these read GIR and AN.

Belongs to the IPP isomerase type 2 family. As to quaternary structure, homooctamer. Dimer of tetramers. Requires FMN as cofactor. The cofactor is NADPH. Mg(2+) is required as a cofactor.

It localises to the cytoplasm. The enzyme catalyses isopentenyl diphosphate = dimethylallyl diphosphate. Functionally, involved in the biosynthesis of isoprenoids. Catalyzes the 1,3-allylic rearrangement of the homoallylic substrate isopentenyl (IPP) to its allylic isomer, dimethylallyl diphosphate (DMAPP). This is Isopentenyl-diphosphate delta-isomerase from Metallosphaera sedula (strain ATCC 51363 / DSM 5348 / JCM 9185 / NBRC 15509 / TH2).